Reading from the N-terminus, the 327-residue chain is tRNA uridine(34) hydroxylase (327 aa).

The Rhodanese domain maps to 142–240; that stretch reads DDPDTLVIDT…YLEQVPEAES (99 aa). The active-site Cysteine persulfide intermediate is cysteine 200.

It belongs to the TrhO family.

It carries out the reaction uridine(34) in tRNA + AH2 + O2 = 5-hydroxyuridine(34) in tRNA + A + H2O. Functionally, catalyzes oxygen-dependent 5-hydroxyuridine (ho5U) modification at position 34 in tRNAs. In Synechococcus sp. (strain CC9605), this protein is tRNA uridine(34) hydroxylase.